Here is a 168-residue protein sequence, read N- to C-terminus: DOMON domain-containing protein CBG21753 (168 aa).

An N-terminal signal peptide occupies residues 1 to 17 (MIKSMILVALILAFASA). Positions 25-143 (SGFQSYWRFA…CQKWRWIKSG (119 aa)) constitute a DOMON domain. Asn-35 and Asn-94 each carry an N-linked (GlcNAc...) asparagine glycan. Residues 148 to 168 (GQLTRNSKSPKDKKVCPMECN) form a disordered region. Residues 156–168 (SPKDKKVCPMECN) show a composition bias toward basic and acidic residues.

The protein localises to the secreted. The chain is DOMON domain-containing protein CBG21753 from Caenorhabditis briggsae.